We begin with the raw amino-acid sequence, 187 residues long: Ribosome-recycling factor (187 aa).

Belongs to the RRF family.

It is found in the cytoplasm. Functionally, responsible for the release of ribosomes from messenger RNA at the termination of protein biosynthesis. May increase the efficiency of translation by recycling ribosomes from one round of translation to another. This chain is Ribosome-recycling factor, found in Flavobacterium psychrophilum (strain ATCC 49511 / DSM 21280 / CIP 103535 / JIP02/86).